We begin with the raw amino-acid sequence, 174 residues long: Ribosome maturation factor RimM (174 aa).

Residues 97–171 form the PRC barrel domain; the sequence is EGYYYDFDII…RMVIDPIPGL (75 aa).

It belongs to the RimM family. Binds ribosomal protein uS19.

The protein localises to the cytoplasm. Its function is as follows. An accessory protein needed during the final step in the assembly of 30S ribosomal subunit, possibly for assembly of the head region. Essential for efficient processing of 16S rRNA. May be needed both before and after RbfA during the maturation of 16S rRNA. It has affinity for free ribosomal 30S subunits but not for 70S ribosomes. This chain is Ribosome maturation factor RimM, found in Symbiobacterium thermophilum (strain DSM 24528 / JCM 14929 / IAM 14863 / T).